The following is a 238-amino-acid chain: Demethylmenaquinone methyltransferase (238 aa).

S-adenosyl-L-methionine-binding positions include Thr-65, Asp-85, and 109–110 (DA).

Belongs to the class I-like SAM-binding methyltransferase superfamily. MenG/UbiE family.

The catalysed reaction is a 2-demethylmenaquinol + S-adenosyl-L-methionine = a menaquinol + S-adenosyl-L-homocysteine + H(+). It functions in the pathway quinol/quinone metabolism; menaquinone biosynthesis; menaquinol from 1,4-dihydroxy-2-naphthoate: step 2/2. Methyltransferase required for the conversion of demethylmenaquinol (DMKH2) to menaquinol (MKH2). The polypeptide is Demethylmenaquinone methyltransferase (Roseiflexus sp. (strain RS-1)).